The sequence spans 70 residues: UPF0519 protein D (70 aa).

Belongs to the UPF0519 family.

This Dictyostelium discoideum (Social amoeba) protein is UPF0519 protein D.